The chain runs to 334 residues: Glyceraldehyde-3-phosphate dehydrogenase (334 aa).

Residues 12-13 (RI), aspartate 37, arginine 81, and serine 123 each bind NAD(+). D-glyceraldehyde 3-phosphate is bound by residues 153-155 (SCT) and threonine 184. The Nucleophile role is filled by cysteine 154. Asparagine 185 is a binding site for NAD(+). D-glyceraldehyde 3-phosphate is bound by residues arginine 199, 212–213 (TG), and arginine 235. Asparagine 314 contacts NAD(+).

It belongs to the glyceraldehyde-3-phosphate dehydrogenase family. As to quaternary structure, homotetramer.

The protein localises to the cytoplasm. The enzyme catalyses D-glyceraldehyde 3-phosphate + phosphate + NAD(+) = (2R)-3-phospho-glyceroyl phosphate + NADH + H(+). Its pathway is carbohydrate degradation; glycolysis; pyruvate from D-glyceraldehyde 3-phosphate: step 1/5. Functionally, catalyzes the oxidative phosphorylation of glyceraldehyde 3-phosphate (G3P) to 1,3-bisphosphoglycerate (BPG) using the cofactor NAD. The first reaction step involves the formation of a hemiacetal intermediate between G3P and a cysteine residue, and this hemiacetal intermediate is then oxidized to a thioester, with concomitant reduction of NAD to NADH. The reduced NADH is then exchanged with the second NAD, and the thioester is attacked by a nucleophilic inorganic phosphate to produce BPG. The sequence is that of Glyceraldehyde-3-phosphate dehydrogenase (gap) from Pseudomonas aeruginosa (strain ATCC 15692 / DSM 22644 / CIP 104116 / JCM 14847 / LMG 12228 / 1C / PRS 101 / PAO1).